Consider the following 389-residue polypeptide: Protein MEI2-like 7 (389 aa).

The segment covering 170–184 (RRGMSKVYKPRKPQR) has biased composition (basic residues). The segment at 170-211 (RRGMSKVYKPRKPQRAGRERSPSPSPVFTTRPMSPTPPMQKL) is disordered. Residues 216–320 (TTVMVRNIPN…KIIDIRAARI (105 aa)) form the RRM domain. The interval 351 to 370 (PRDGSTAGAGAPSPPAVKTV) is disordered.

Its function is as follows. Probable RNA-binding protein that may play a role in growth regulation. This chain is Protein MEI2-like 7 (OML7), found in Oryza sativa subsp. japonica (Rice).